The primary structure comprises 361 residues: tRNA 2-selenouridine synthase (361 aa).

Residues 11-134 form the Rhodanese domain; it reads LLADTPLIDV…LRQTAIQATW (124 aa). C94 (S-selanylcysteine intermediate) is an active-site residue.

Belongs to the SelU family. Monomer.

The enzyme catalyses 5-methylaminomethyl-2-thiouridine(34) in tRNA + selenophosphate + (2E)-geranyl diphosphate + H2O + H(+) = 5-methylaminomethyl-2-selenouridine(34) in tRNA + (2E)-thiogeraniol + phosphate + diphosphate. The catalysed reaction is 5-methylaminomethyl-2-thiouridine(34) in tRNA + (2E)-geranyl diphosphate = 5-methylaminomethyl-S-(2E)-geranyl-thiouridine(34) in tRNA + diphosphate. It carries out the reaction 5-methylaminomethyl-S-(2E)-geranyl-thiouridine(34) in tRNA + selenophosphate + H(+) = 5-methylaminomethyl-2-(Se-phospho)selenouridine(34) in tRNA + (2E)-thiogeraniol. It catalyses the reaction 5-methylaminomethyl-2-(Se-phospho)selenouridine(34) in tRNA + H2O = 5-methylaminomethyl-2-selenouridine(34) in tRNA + phosphate. Involved in the post-transcriptional modification of the uridine at the wobble position (U34) of tRNA(Lys), tRNA(Glu) and tRNA(Gln). Catalyzes the conversion of 2-thiouridine (S2U-RNA) to 2-selenouridine (Se2U-RNA). Acts in a two-step process involving geranylation of 2-thiouridine (S2U) to S-geranyl-2-thiouridine (geS2U) and subsequent selenation of the latter derivative to 2-selenouridine (Se2U) in the tRNA chain. The polypeptide is tRNA 2-selenouridine synthase (Salmonella schwarzengrund (strain CVM19633)).